Reading from the N-terminus, the 115-residue chain is Dolichyl-diphosphooligosaccharide--protein glycosyltransferase subunit DAD2 (115 aa).

At 1–31 the chain is on the cytoplasmic side; that stretch reads MVKSTSKDAQDLFHSLHSAYTATPTNLKIID. The helical transmembrane segment at 32 to 52 threads the bilayer; it reads LYVCFAVFTALIQVAYMALVG. The Lumenal portion of the chain corresponds to 53–55; that stretch reads SFP. The helical transmembrane segment at 56–76 threads the bilayer; sequence FNSFLSGVLSCIGTAVLAVCL. Topologically, residues 77-94 are cytoplasmic; it reads RIQVNKENKEFKDLAPER. The helical transmembrane segment at 95-115 threads the bilayer; that stretch reads AFADFVLCNLVLHLVIINFLG.

This sequence belongs to the DAD/OST2 family. Component of the oligosaccharyltransferase (OST) complex.

The protein localises to the endoplasmic reticulum membrane. It functions in the pathway protein modification; protein glycosylation. Functionally, subunit of the oligosaccharyl transferase (OST) complex that catalyzes the initial transfer of a defined glycan (Glc(3)Man(9)GlcNAc(2) in eukaryotes) from the lipid carrier dolichol-pyrophosphate to an asparagine residue within an Asn-X-Ser/Thr consensus motif in nascent polypeptide chains, the first step in protein N-glycosylation. N-glycosylation occurs cotranslationally and the complex associates with the Sec61 complex at the channel-forming translocon complex that mediates protein translocation across the endoplasmic reticulum (ER). All subunits are required for a maximal enzyme activity. This Arabidopsis thaliana (Mouse-ear cress) protein is Dolichyl-diphosphooligosaccharide--protein glycosyltransferase subunit DAD2 (DAD2).